The following is a 272-amino-acid chain: uncharacterized protein (272 aa).

2 helical membrane passes run 9–29 and 252–272; these read GGDI…ASEH and SHIS…ISFI.

The protein localises to the membrane. This is an uncharacterized protein from Caenorhabditis elegans.